Reading from the N-terminus, the 428-residue chain is Keratin, type I cytoskeletal 18-A (428 aa).

A head region spans residues 2–78 (SFRSQTSSTT…SVKGSGLFNN (77 aa)). The interval 79–114 (EKETMQILNDRLASYLETVRNLEQANSKLELQIRET) is coil 1A. The region spanning 79–390 (EKETMQILND…RLLDGEDFRL (312 aa)) is the IF rod domain. Residues 115–131 (LEKRGPTTQDYSAYEKV) are linker 1. The interval 132 to 223 (VEDLKSQIYD…RSHQTDVEEL (92 aa)) is coil 1B. A linker 12 region spans residues 224 to 247 (RKHISECGVQVDVDAPKGQDLSKI). The tract at residues 248–385 (MEEIRAQYET…IATYRRLLDG (138 aa)) is coil 2. Positions 386–428 (EDFRLQDALAVQTTKVQKKITVTETVVDGKVVSQSSEVQEIKK) are tail.

Belongs to the intermediate filament family. Heterotetramer of two type I and two type II keratins. Keratin-18 associates with keratin-8. Post-translationally, phosphorylated. Proteolytically cleaved by caspases during epithelial cell apoptosis.

Functionally, when phosphorylated, plays a role in filament reorganization. This chain is Keratin, type I cytoskeletal 18-A, found in Polypterus senegalus (Senegal bichir).